We begin with the raw amino-acid sequence, 340 residues long: Holliday junction branch migration complex subunit RuvB (340 aa).

Positions 1–184 are large ATPase domain (RuvB-L); sequence MNENLDPTNQ…FGIQSRLQYY (184 aa). ATP-binding positions include L23, R24, G65, K68, T69, T70, 131–133, R174, Y184, and R221; that span reads EDF. T69 contributes to the Mg(2+) binding site. Positions 185–255 are small ATPAse domain (RuvB-S); sequence NAELLTTIVQ…IAKFALNALH (71 aa). The tract at residues 258–340 is head domain (RuvB-H); it reads AHGLDEMDNK…VKANVQGGLF (83 aa). Residues R313 and R318 each contribute to the DNA site.

Belongs to the RuvB family. Homohexamer. Forms an RuvA(8)-RuvB(12)-Holliday junction (HJ) complex. HJ DNA is sandwiched between 2 RuvA tetramers; dsDNA enters through RuvA and exits via RuvB. An RuvB hexamer assembles on each DNA strand where it exits the tetramer. Each RuvB hexamer is contacted by two RuvA subunits (via domain III) on 2 adjacent RuvB subunits; this complex drives branch migration. In the full resolvosome a probable DNA-RuvA(4)-RuvB(12)-RuvC(2) complex forms which resolves the HJ.

The protein localises to the cytoplasm. The catalysed reaction is ATP + H2O = ADP + phosphate + H(+). Functionally, the RuvA-RuvB-RuvC complex processes Holliday junction (HJ) DNA during genetic recombination and DNA repair, while the RuvA-RuvB complex plays an important role in the rescue of blocked DNA replication forks via replication fork reversal (RFR). RuvA specifically binds to HJ cruciform DNA, conferring on it an open structure. The RuvB hexamer acts as an ATP-dependent pump, pulling dsDNA into and through the RuvAB complex. RuvB forms 2 homohexamers on either side of HJ DNA bound by 1 or 2 RuvA tetramers; 4 subunits per hexamer contact DNA at a time. Coordinated motions by a converter formed by DNA-disengaged RuvB subunits stimulates ATP hydrolysis and nucleotide exchange. Immobilization of the converter enables RuvB to convert the ATP-contained energy into a lever motion, pulling 2 nucleotides of DNA out of the RuvA tetramer per ATP hydrolyzed, thus driving DNA branch migration. The RuvB motors rotate together with the DNA substrate, which together with the progressing nucleotide cycle form the mechanistic basis for DNA recombination by continuous HJ branch migration. Branch migration allows RuvC to scan DNA until it finds its consensus sequence, where it cleaves and resolves cruciform DNA. This is Holliday junction branch migration complex subunit RuvB from Flavobacterium psychrophilum (strain ATCC 49511 / DSM 21280 / CIP 103535 / JIP02/86).